A 549-amino-acid chain; its full sequence is Glucose-6-phosphate isomerase (549 aa).

N6-acetyllysine occurs at positions 80, 228, and 234. Catalysis depends on E355, which acts as the Proton donor. Active-site residues include H386 and K514.

Belongs to the GPI family.

It is found in the cytoplasm. The catalysed reaction is alpha-D-glucose 6-phosphate = beta-D-fructose 6-phosphate. It participates in carbohydrate biosynthesis; gluconeogenesis. The protein operates within carbohydrate degradation; glycolysis; D-glyceraldehyde 3-phosphate and glycerone phosphate from D-glucose: step 2/4. Its function is as follows. Catalyzes the reversible isomerization of glucose-6-phosphate to fructose-6-phosphate. The chain is Glucose-6-phosphate isomerase from Escherichia coli O127:H6 (strain E2348/69 / EPEC).